The primary structure comprises 257 residues: Pyridoxine 5'-phosphate synthase (257 aa).

Asn6 serves as a coordination point for 3-amino-2-oxopropyl phosphate. 8-9 (DH) provides a ligand contact to 1-deoxy-D-xylulose 5-phosphate. Position 17 (Arg17) interacts with 3-amino-2-oxopropyl phosphate. His41 (proton acceptor) is an active-site residue. 1-deoxy-D-xylulose 5-phosphate-binding residues include Arg43 and His48. Residue Glu68 is the Proton acceptor of the active site. Thr98 lines the 1-deoxy-D-xylulose 5-phosphate pocket. His210 (proton donor) is an active-site residue. Residues Gly211 and 232–233 (GQ) each bind 3-amino-2-oxopropyl phosphate.

Belongs to the PNP synthase family. Homooctamer; tetramer of dimers.

The protein localises to the cytoplasm. It carries out the reaction 3-amino-2-oxopropyl phosphate + 1-deoxy-D-xylulose 5-phosphate = pyridoxine 5'-phosphate + phosphate + 2 H2O + H(+). It functions in the pathway cofactor biosynthesis; pyridoxine 5'-phosphate biosynthesis; pyridoxine 5'-phosphate from D-erythrose 4-phosphate: step 5/5. Functionally, catalyzes the complicated ring closure reaction between the two acyclic compounds 1-deoxy-D-xylulose-5-phosphate (DXP) and 3-amino-2-oxopropyl phosphate (1-amino-acetone-3-phosphate or AAP) to form pyridoxine 5'-phosphate (PNP) and inorganic phosphate. This chain is Pyridoxine 5'-phosphate synthase, found in Campylobacter jejuni subsp. jejuni serotype O:6 (strain 81116 / NCTC 11828).